We begin with the raw amino-acid sequence, 204 residues long: Ubiquitin-conjugating enzyme E2 T (204 aa).

In terms of domain architecture, UBC core spans 2–152 (QRASRLKKEL…AKQWTEAHAR (151 aa)). The active-site Glycyl thioester intermediate is C86. Residues K91 and K181 each participate in a glycyl lysine isopeptide (Lys-Gly) (interchain with G-Cter in ubiquitin) cross-link. A disordered region spans residues 150 to 204 (HARQKQKADEEELGTSSEVGDSEESHSTQKRKARPLGGMEKKFSPDVQRVYPGPS). Glycyl lysine isopeptide (Lys-Gly) (interchain with G-Cter in SUMO2) cross-links involve residues K190 and K191. S193 is modified (phosphoserine).

This sequence belongs to the ubiquitin-conjugating enzyme family. In terms of assembly, interacts with FANCL and BRCA1. Post-translationally, auto-ubiquitinated. Effects of auto-monoubiquitination at Lys-91 and Lys-181 are unclear.

The protein resides in the nucleus. The catalysed reaction is S-ubiquitinyl-[E1 ubiquitin-activating enzyme]-L-cysteine + [E2 ubiquitin-conjugating enzyme]-L-cysteine = [E1 ubiquitin-activating enzyme]-L-cysteine + S-ubiquitinyl-[E2 ubiquitin-conjugating enzyme]-L-cysteine.. It participates in protein modification; protein ubiquitination. Functionally, accepts ubiquitin from the E1 complex and catalyzes its covalent attachment to other proteins. Catalyzes monoubiquitination. Involved in mitomycin-C (MMC)-induced DNA repair: acts as a specific E2 ubiquitin-conjugating enzyme for the Fanconi anemia complex by associating with E3 ubiquitin-protein ligase FANCL and catalyzing monoubiquitination of FANCD2, a key step in the DNA damage pathway. Also mediates monoubiquitination of FANCL and FANCI. May contribute to ubiquitination and degradation of BRCA1. In vitro able to promote polyubiquitination using all 7 ubiquitin Lys residues, but may prefer 'Lys-11'-, 'Lys-27'-, 'Lys-48'- and 'Lys-63'-linked polyubiquitination. The protein is Ubiquitin-conjugating enzyme E2 T (Ube2t) of Mus musculus (Mouse).